The following is a 582-amino-acid chain: Protein NUCLEAR FUSION DEFECTIVE 4 (582 aa).

Positions 1 to 20 (MRPRIRDVSDKLRPNRASFD) are disordered. Transmembrane regions (helical) follow at residues 46 to 66 (VLVA…FSAY), 100 to 120 (IALG…MGFV), 132 to 152 (IITL…LSIC), 172 to 192 (LALS…SLAF), 202 to 222 (LYLL…LYPV), 243 to 263 (VFTI…LSSS), 270 to 290 (LNFI…LLVY), and 358 to 378 (LEFW…LVYS). An N-linked (GlcNAc...) asparagine glycan is attached at N391. 5 consecutive transmembrane segments (helical) span residues 395–412 (LVTI…LSAA), 425–445 (TGWF…LAVS), 458–478 (LIGL…SDLF), 489–509 (ILIT…ASIY), and 536–556 (TFVF…SLYI).

It is found in the membrane. Functionally, required for karyogamy during female gametophyte development, when the two polar nuclei fuse to form the diploid central cell nucleus. This is Protein NUCLEAR FUSION DEFECTIVE 4 from Arabidopsis thaliana (Mouse-ear cress).